A 620-amino-acid polypeptide reads, in one-letter code: Extensin (620 aa).

An N-terminal signal peptide occupies residues 1–20; it reads MKLSTLFALVLLLQSTAILS. The span at 34–45 shows a compositional bias: pro residues; sequence LPPPVTSQPPPS. A disordered region spans residues 34–620; it reads LPPPVTSQPP…PPYGLLLSTP (587 aa). An H-A-P-P repeat occupies 70–73; sequence HAPP. Positions 106 to 129 are enriched in pro residues; sequence NPPPSPVISPSHPPPSYGAPPPSH. The segment covering 145 to 163 has biased composition (low complexity); sequence SHGHAPPSGGHTPPRGQHP. Residues 148 to 151 form an H-A-P-P repeat; it reads HAPP. Basic residues predominate over residues 164–177; sequence PSHRRPSPPSRHGH. A compositionally biased stretch (pro residues) spans 178-219; sequence PPPPTYAQPPPTPIYSPSPQVQPPPTYSPPPPTHVQPTPSPP. Residues 205–620 form a contains the Ser-Pro(4) repeats region; that stretch reads SPPPPTHVQP…PPYGLLLSTP (416 aa). 2 repeat units span residues 229–235 and 236–242. Basic residues predominate over residues 229–241; that stretch reads THRHAPPTHRHAP. A 2 X 7 AA tandem repeats of T-H-R-H-A-P-P region spans residues 229–242; that stretch reads THRHAPPTHRHAPP. 2 stretches are compositionally biased toward pro residues: residues 251–552 and 562–613; these read HLPP…PPHW and GQPP…PPPY. A 3 X approximate tandem repeats region spans residues 499-600; that stretch reads PPTFSPPPPR…PTPTYGQPPS (102 aa).

Post-translationally, hydroxylated on proline residues in the S-P-P-P-P repeat. O-glycosylated on hydroxyprolines. Expressed in the tip of the emerging lateral roots.

It is found in the secreted. The protein resides in the primary cell wall. Functionally, has a specialized structural function, possibly in the mechanical penetration of the cortex and epidermis of the main root. This Nicotiana tabacum (Common tobacco) protein is Extensin (HRGPNT3).